Here is a 997-residue protein sequence, read N- to C-terminus: LPS-assembly protein LptD (997 aa).

The signal sequence occupies residues 1–27 (MLYSPLYQSIRLILFGALGLSSLTVSA).

It belongs to the LptD family. In terms of assembly, component of the lipopolysaccharide transport and assembly complex. Interacts with LptE and LptA.

The protein resides in the cell outer membrane. Functionally, together with LptE, is involved in the assembly of lipopolysaccharide (LPS) at the surface of the outer membrane. This Psychrobacter cryohalolentis (strain ATCC BAA-1226 / DSM 17306 / VKM B-2378 / K5) protein is LPS-assembly protein LptD.